A 327-amino-acid chain; its full sequence is Delta(3,5)-Delta(2,4)-dienoyl-CoA isomerase, mitochondrial (327 aa).

Residues 1–33 (MATAMTVSSKLRGLLMQQLRGTSQLYFNISLRS) constitute a mitochondrion transit peptide. 115 to 119 (SGIDL) contributes to the substrate binding site. The residue at position 147 (lysine 147) is an N6-acetyllysine. Residue glycine 173 coordinates substrate. Lysine 230 is modified (N6-succinyllysine). Phosphoserine is present on serine 267. Lysine 316 is subject to N6-succinyllysine. The Microbody targeting signal signature appears at 325-327 (SKL). An N6-acetyllysine modification is found at lysine 326.

It belongs to the enoyl-CoA hydratase/isomerase family. As to quaternary structure, homohexamer.

It is found in the mitochondrion. It localises to the peroxisome. The catalysed reaction is (3E,5Z)-octadienoyl-CoA = (2E,4E)-octadienoyl-CoA. It catalyses the reaction (3E,5Z,8Z,11Z,14Z)-eicosapentaenoyl-CoA = (2E,4E,8Z,11Z,14Z)-eicosapentaenoyl-CoA. It participates in lipid metabolism; fatty acid beta-oxidation. Its function is as follows. Isomerization of 3-trans,5-cis-dienoyl-CoA to 2-trans,4-trans-dienoyl-CoA. This chain is Delta(3,5)-Delta(2,4)-dienoyl-CoA isomerase, mitochondrial, found in Mus musculus (Mouse).